Consider the following 105-residue polypeptide: MKNKIKIRLKSFDHRSLDQATKEIVSAVKRTFANINGPIPLPRKIERFTVNRSPHVHKKSREQFEIRKHKRLLVIDDPNPAVVDALSKVDLAAGVDVVIELESGE.

Belongs to the universal ribosomal protein uS10 family. Part of the 30S ribosomal subunit.

Involved in the binding of tRNA to the ribosomes. This is Small ribosomal subunit protein uS10 from Rickettsia felis (strain ATCC VR-1525 / URRWXCal2) (Rickettsia azadi).